The chain runs to 189 residues: dTTP/UTP pyrophosphatase (189 aa).

The active-site Proton acceptor is aspartate 71.

This sequence belongs to the Maf family. YhdE subfamily. Requires a divalent metal cation as cofactor.

It localises to the cytoplasm. The catalysed reaction is dTTP + H2O = dTMP + diphosphate + H(+). It catalyses the reaction UTP + H2O = UMP + diphosphate + H(+). Functionally, nucleoside triphosphate pyrophosphatase that hydrolyzes dTTP and UTP. May have a dual role in cell division arrest and in preventing the incorporation of modified nucleotides into cellular nucleic acids. This Pseudoalteromonas translucida (strain TAC 125) protein is dTTP/UTP pyrophosphatase.